Consider the following 518-residue polypeptide: MSLLIKNGTIVNDDAMFKSDVLVHDGKIVEIAPSIDPTPGLEVVDATDRFVIPGGIDPHTHMQLPFMGEVAKDDFHRGTEAAVAGGTTMIIDFVIPTKGESLLVAYDRWRGWADPKVVCDYGLSMAITSWGQEIAKEMEMVTKADYGINSFKFFLAYAGVFMVRDEEFYQGMLQCAKLRALARVHAENGAVIAERCEHLLSSGITGPEGHTQSRPEELEAEATFRACTMASQANCPLYVVHVMSKGAAAAIAHHRKKGAVVFGEPIAAGLATDGSHYYNEDWLHAARYIMSPPLSRDPSTPNALMKLLAAGELHLTATDNCTFDCHQKSLGKDDFTKIPNGVNGVEDRMSVVWDKGVHAGIIDPMKFVAVTSTMAAKIFNCYPRKGRIAVGSDADIVVWNANATRTISKDTHHHAIDFNIFEGMQVHGVPETTICRGRIVWADGQLRTVQGAGRFVPLPPDSQIVFSAVDNRGKALEPVKVERAPYVATTLEAPDANANIVVKTRSAVPPGGISSIQF.

Residues His59, His61, and Lys152 each contribute to the Zn(2+) site. At Lys152 the chain carries N6-carboxylysine. Tyr157 is a binding site for substrate. His185 and His241 together coordinate Zn(2+). A substrate-binding site is contributed by Ser291. Asp319 provides a ligand contact to Zn(2+). Asn340 contacts substrate.

This sequence belongs to the metallo-dependent hydrolases superfamily. Hydantoinase/dihydropyrimidinase family. As to quaternary structure, homotetramer. It depends on Zn(2+) as a cofactor. Carboxylation allows a single lysine to coordinate two zinc ions.

It carries out the reaction 5,6-dihydrouracil + H2O = 3-(carbamoylamino)propanoate + H(+). The sequence is that of Dihydropyrimidinase 2 (dhp-2) from Caenorhabditis briggsae.